Here is a 225-residue protein sequence, read N- to C-terminus: VAVSIACALFNLKCKIYMGYKDIKRQSPNVFRMKLMGAEVISVRNGSGTLKDACNEALRDWSGNYQKSHYIIGTAAGPHPYPTIVKEFQKMIGEEAKKQILEQEKKLPDAIIACVGGGSNAIGIFSEFMNEKVDLIGVEPAGRGIETGKHGAPLNHGRTGIYFGMKSSLMQNQEGQIEKSWSISAGLDFPSVGPEHAWLHSINRAQYVSITDIEALEAFQILSKK.

The protein belongs to the TrpB family. In terms of assembly, tetramer of two alpha and two beta chains. The cofactor is pyridoxal 5'-phosphate.

The enzyme catalyses (1S,2R)-1-C-(indol-3-yl)glycerol 3-phosphate + L-serine = D-glyceraldehyde 3-phosphate + L-tryptophan + H2O. The protein operates within amino-acid biosynthesis; L-tryptophan biosynthesis; L-tryptophan from chorismate: step 5/5. Functionally, the beta subunit is responsible for the synthesis of L-tryptophan from indole and L-serine. The chain is Tryptophan synthase beta chain (trpB) from Buchnera aphidicola subsp. Rhopalosiphum maidis.